We begin with the raw amino-acid sequence, 339 residues long: MLRLDKFKKYSLTFGVTPIEHLPRLTAALGGKVQIYAKRDDCNSGLAMGGNKLRKLEYIVPDAIESNADTLVSIGGVQSNHTRMVAATAAKIGMKCVVVQESWVPHEDAVYDRVGNILMTRLMGADSRIVEDGFDIGIRKSWENAIQSVKDAGGKPYGIPAGASVHKFGGLGYVGFAEEVRAQEAEMGIKFDYIIVCVVTGSTQGGMIVGFAADGRADRVIGIDASGTPEQTRAQVRQIVDNTAELVELGRKVRDDEIVILNDYAYPAYGVPSAETNEAIRLAARTEAMITDPVYEGKSMQGMIDLVKKGYFPEGSKVLYAHLGGAPAINGYSYTYRNG.

An N6-(pyridoxal phosphate)lysine modification is found at K52. The active-site Nucleophile is the S79.

It belongs to the ACC deaminase/D-cysteine desulfhydrase family. Homotrimer. The cofactor is pyridoxal 5'-phosphate.

It catalyses the reaction 1-aminocyclopropane-1-carboxylate + H2O = 2-oxobutanoate + NH4(+). In terms of biological role, catalyzes a cyclopropane ring-opening reaction, the irreversible conversion of 1-aminocyclopropane-1-carboxylate (ACC) to ammonia and alpha-ketobutyrate. Allows growth on ACC as a nitrogen source. In Bradyrhizobium sp. (strain ORS 278), this protein is 1-aminocyclopropane-1-carboxylate deaminase.